A 211-amino-acid polypeptide reads, in one-letter code: MKPFKALTARQQEVYDLLKRHLENTGMPPTRAEISKELGFRSPNAAEEHLKALARKGVIEIISGTSRGIRLLLEESESDENQGLPLVGRVAAGEPILAEQHIEGTYQVDANMFKPQANFLLKVYGQSMKNIGILDGDLLAVHSTKDVRNGQIVVARIEDEVTVKRLERKGSVIYLHAENEEFAPIVVDLNQQPNFEIEGIAVGIIRNNAWM.

The H-T-H motif DNA-binding region spans 31 to 51; it reads RAEISKELGFRSPNAAEEHLK. Catalysis depends on for autocatalytic cleavage activity residues Ser-127 and Lys-164.

Belongs to the peptidase S24 family. Homodimer.

It carries out the reaction Hydrolysis of Ala-|-Gly bond in repressor LexA.. Represses a number of genes involved in the response to DNA damage (SOS response), including recA and lexA. In the presence of single-stranded DNA, RecA interacts with LexA causing an autocatalytic cleavage which disrupts the DNA-binding part of LexA, leading to derepression of the SOS regulon and eventually DNA repair. The protein is LexA repressor of Pasteurella multocida (strain Pm70).